A 278-amino-acid polypeptide reads, in one-letter code: HTH-type transcriptional activator RhaS (278 aa).

The HTH araC/xylS-type domain maps to 174-272 (NQLMAWLEEH…NWSPRDIRQG (99 aa)). 2 consecutive DNA-binding regions (H-T-H motif) follow at residues 191–212 (EAVA…KQHT) and 239–262 (VTEI…RREF).

Binds DNA as a dimer.

The protein localises to the cytoplasm. In terms of biological role, activates expression of the rhaBAD and rhaT operons. This is HTH-type transcriptional activator RhaS from Salmonella schwarzengrund (strain CVM19633).